Here is a 118-residue protein sequence, read N- to C-terminus: Ribosome-binding factor A (118 aa).

It belongs to the RbfA family. In terms of assembly, monomer. Binds 30S ribosomal subunits, but not 50S ribosomal subunits or 70S ribosomes.

The protein resides in the cytoplasm. One of several proteins that assist in the late maturation steps of the functional core of the 30S ribosomal subunit. Associates with free 30S ribosomal subunits (but not with 30S subunits that are part of 70S ribosomes or polysomes). Required for efficient processing of 16S rRNA. May interact with the 5'-terminal helix region of 16S rRNA. In Shouchella clausii (strain KSM-K16) (Alkalihalobacillus clausii), this protein is Ribosome-binding factor A.